The sequence spans 167 residues: Ion-translocating oxidoreductase complex subunit B (167 aa).

A hydrophobic region spans residues 1–22 (MITLIIFSFLSFLLGIILSFTA). Positions 28–87 (QEDPIVEIVNELLPQSQCAQCGYSGCYPYAKAIVENSEKINKCIPGGTDLISAISSVLSI) constitute a 4Fe-4S domain. Positions 45, 48, 53, 70, 113, 116, 119, 123, 143, 146, 149, and 153 each coordinate [4Fe-4S] cluster. 2 4Fe-4S ferredoxin-type domains span residues 104-133 (NTVL…GAPN) and 134-163 (FIHT…IKKE).

This sequence belongs to the 4Fe4S bacterial-type ferredoxin family. RnfB subfamily. As to quaternary structure, the complex is composed of six subunits: RnfA, RnfB, RnfC, RnfD, RnfE and RnfG. Requires [4Fe-4S] cluster as cofactor.

Its subcellular location is the cell inner membrane. Part of a membrane-bound complex that couples electron transfer with translocation of ions across the membrane. The protein is Ion-translocating oxidoreductase complex subunit B of Buchnera aphidicola subsp. Acyrthosiphon pisum (strain Tuc7).